The following is a 506-amino-acid chain: Spindle pole body protein CSA6 (506 aa).

Disordered regions lie at residues 18 to 121 (SPIK…PNEN), 252 to 276 (EKHN…VETQ), 329 to 429 (PSSP…YSIR), and 447 to 470 (KNDQ…EEKV). The segment covering 38 to 48 (IDLRDYMDRQK) has biased composition (basic and acidic residues). The span at 50-59 (SRNYSDSEYT) shows a compositional bias: polar residues. The span at 63 to 72 (IKREKPETKQ) shows a compositional bias: basic and acidic residues. Polar residues predominate over residues 94-119 (PTKNYSQHVMQERSAPNSPQKKSLPN). Composition is skewed to polar residues over residues 330–353 (SSPN…SVNL) and 361–389 (QPSH…NPSP). 2 stretches are compositionally biased toward basic and acidic residues: residues 412–422 (EWTREREERDG) and 461–470 (TDGKEEEEKV).

It is found in the cytoplasm. The protein localises to the cytoskeleton. The protein resides in the microtubule organizing center. Its subcellular location is the spindle pole body. Its function is as follows. Plays a role in mitotic spindle pole body organization, possibly at the point of spindle pole body separation. Required for mitotic exit. The protein is Spindle pole body protein CSA6 of Candida tropicalis (strain ATCC MYA-3404 / T1) (Yeast).